Consider the following 333-residue polypeptide: Serine proteinase inhibitor 2 (333 aa).

The protein belongs to the serpin family. Poxviruses subfamily.

The protein resides in the host cytoplasm. In terms of biological role, weak inhibitor of the interleukin-1-beta converting enzyme (ICE) and of granzyme B. Does not form a stable complex with ICE, but can for a stable complex with granzyme B. This chain is Serine proteinase inhibitor 2 (SERP2), found in Myxoma virus (strain Uriarra) (MYXV).